Reading from the N-terminus, the 388-residue chain is S-adenosylmethionine synthase (388 aa).

Histidine 16 contributes to the ATP binding site. Position 18 (aspartate 18) interacts with Mg(2+). Position 44 (glutamate 44) interacts with K(+). The L-methionine site is built by glutamate 57 and glutamine 100. The flexible loop stretch occupies residues 100–110 (QSADIAQGVNE). ATP-binding positions include 167 to 169 (DAK), 233 to 234 (RF), aspartate 242, 248 to 249 (RK), alanine 265, and lysine 269. Aspartate 242 contacts L-methionine. Lysine 273 lines the L-methionine pocket.

This sequence belongs to the AdoMet synthase family. In terms of assembly, homotetramer; dimer of dimers. It depends on Mg(2+) as a cofactor. K(+) serves as cofactor.

The protein resides in the cytoplasm. It carries out the reaction L-methionine + ATP + H2O = S-adenosyl-L-methionine + phosphate + diphosphate. The protein operates within amino-acid biosynthesis; S-adenosyl-L-methionine biosynthesis; S-adenosyl-L-methionine from L-methionine: step 1/1. In terms of biological role, catalyzes the formation of S-adenosylmethionine (AdoMet) from methionine and ATP. The overall synthetic reaction is composed of two sequential steps, AdoMet formation and the subsequent tripolyphosphate hydrolysis which occurs prior to release of AdoMet from the enzyme. The chain is S-adenosylmethionine synthase from Aromatoleum aromaticum (strain DSM 19018 / LMG 30748 / EbN1) (Azoarcus sp. (strain EbN1)).